The sequence spans 313 residues: MSKMESTQQMASSIINTSFEAAVVAATSTLELMGIQYDYNEVYTRVKSKFDYVMDDSGVKNNLLGKAATYDQALNGKFGSAARNRNWMADTRTTARLDEDVNKLRMMLSSKGIDQKMRVLNACFNVKRVPGKSSSIIKCTRLMRDKIERGEVEVDDSFVEEKMEVDTIDWKSRYEQLEKRFESLKQRVNEKYTSWVQKAKKVNENMYSLQNVISQQQSQIADLQNYCNKLEVDLQNKISSLVSSVEWYLKSMELPDEIKTDIEQQLNSIDVINPINAIDDFESLIRNIILDYDRIFLMFKGLMRQCNYEYTYE.

Residues 1 to 149 (MSKMESTQQM…TRLMRDKIER (149 aa)) are RNA-binding. The segment at 150–206 (GEVEVDDSFVEEKMEVDTIDWKSRYEQLEKRFESLKQRVNEKYTSWVQKAKKVNENM) is dimerization. A coiled-coil region spans residues 166–237 (DTIDWKSRYE…NKLEVDLQNK (72 aa)). The tract at residues 170 to 234 (WKSRYEQLEK…NYCNKLEVDL (65 aa)) is interaction with host ZC3H7B. Positions 208–313 (SLQNVISQQQ…RQCNYEYTYE (106 aa)) are interaction with host EIF4G1.

This sequence belongs to the rotavirus NSP3 family. In terms of assembly, homodimer. Interacts (via the coiled-coil region) with host ZC3H7B (via LD motif). Interacts with host EIF4G1.

Its subcellular location is the host cytoplasm. Plays an important role in stimulating the translation of viral mRNAs. These mRNAs are capped but not polyadenylated, instead terminating in a conserved sequence 'GACC' at the 3' that is recognized by NSP3, which competes with host PABPC1 for EIF4G1 binding. The interaction between NSP3 and host EIF4G1 stabilizes the EIF4E-EIF4G1 interaction, thereby facilitating the initiation of capped mRNA translation. The protein is Non-structural protein 3 of Rotavirus A (strain RVA/Cow/United States/NCDV-Lincoln/1969/G6P6[1]) (RV-A).